The primary structure comprises 144 residues: Subtilase-type protease inhibitor (144 aa).

Positions 1–35 (MRNTARWAATLGLTATAVCGPLAGASLASPATAPA) are cleaved as a signal peptide. 2 cysteine pairs are disulfide-bonded: cysteine 66/cysteine 81 and cysteine 102/cysteine 132.

The protein belongs to the protease inhibitor I16 (SSI) family. Homodimer.

The protein localises to the secreted. In terms of biological role, strong inhibitory activity toward subtilisin BPN' and, to a lesser extent, toward trypsin. This is Subtilase-type protease inhibitor (sti1) from Streptomyces coelicolor (strain ATCC BAA-471 / A3(2) / M145).